Here is a 118-residue protein sequence, read N- to C-terminus: Vitelline membrane protein Vm32E (118 aa).

An N-terminal signal peptide occupies residues 1 to 17 (MKIVALTLVAFVALAGA). Residues 36–75 (GYPAPPCPTNYLFSCQPNLAPAPCAQEAQAPAYGSAGAYT) form the VM domain.

Belongs to the vitelline membrane family.

Its subcellular location is the secreted. In terms of biological role, major early eggshell protein. The chain is Vitelline membrane protein Vm32E from Drosophila mauritiana (Fruit fly).